The following is a 349-amino-acid chain: tRNA pseudouridine synthase D (349 aa).

Residue Phe26 coordinates substrate. Asp79 functions as the Nucleophile in the catalytic mechanism. Residue Asn128 coordinates substrate. A TRUD domain is found at 154 to 302; the sequence is GVPNYFGSQR…VEGSRRAVLL (149 aa). Phe328 contributes to the substrate binding site.

The protein belongs to the pseudouridine synthase TruD family.

The enzyme catalyses uridine(13) in tRNA = pseudouridine(13) in tRNA. Responsible for synthesis of pseudouridine from uracil-13 in transfer RNAs. This is tRNA pseudouridine synthase D from Yersinia pestis bv. Antiqua (strain Antiqua).